The following is a 336-amino-acid chain: tRNA N6-adenosine threonylcarbamoyltransferase (336 aa).

Residues His112 and His116 each contribute to the Fe cation site. Substrate-binding positions include 136 to 140, Asp169, Gly182, and Asn276; that span reads LVSGG. Fe cation is bound at residue Asp304.

Belongs to the KAE1 / TsaD family. Requires Fe(2+) as cofactor.

Its subcellular location is the cytoplasm. The catalysed reaction is L-threonylcarbamoyladenylate + adenosine(37) in tRNA = N(6)-L-threonylcarbamoyladenosine(37) in tRNA + AMP + H(+). Its function is as follows. Required for the formation of a threonylcarbamoyl group on adenosine at position 37 (t(6)A37) in tRNAs that read codons beginning with adenine. Is involved in the transfer of the threonylcarbamoyl moiety of threonylcarbamoyl-AMP (TC-AMP) to the N6 group of A37, together with TsaE and TsaB. TsaD likely plays a direct catalytic role in this reaction. This chain is tRNA N6-adenosine threonylcarbamoyltransferase, found in Francisella tularensis subsp. holarctica (strain LVS).